Consider the following 244-residue polypeptide: Lymphotoxin-beta (244 aa).

Residues 1-18 (MGALGLEGRGGRLQGRGS) lie on the Cytoplasmic side of the membrane. The helical; Signal-anchor for type II membrane protein transmembrane segment at 19-48 (LLLAVAGATSLVTLLLAVPITVLAVLALVP) threads the bilayer. Topologically, residues 49–244 (QDQGGLVTDT…KTFFGAVMVG (196 aa)) are extracellular. The region spanning 88 to 243 (PAAHLIGAPL…GKTFFGAVMV (156 aa)) is the THD domain. N-linked (GlcNAc...) asparagine glycosylation is present at Asn-222.

The protein belongs to the tumor necrosis factor family. In terms of assembly, heterotrimer of either two LTB and one LTA subunits or (less prevalent) two LTA and one LTB subunits.

The protein localises to the membrane. Functionally, cytokine that binds to LTBR/TNFRSF3. May play a specific role in immune response regulation. Provides the membrane anchor for the attachment of the heterotrimeric complex to the cell surface. The sequence is that of Lymphotoxin-beta (LTB) from Macaca mulatta (Rhesus macaque).